Reading from the N-terminus, the 258-residue chain is Capsid protein (258 aa).

Residues 3–20 (KRPGDIIISTPGSKVRRR) carry the Bipartite nuclear localization signal motif. The short motif at 41–55 (RKRAWMNRPMYRKPM) is the Nuclear localization signal element. Residues 69-86 (CEGPCKVQSFEQRDDVKH) fold into a zinc finger. The Nuclear export signal signature appears at 102-123 (LTHRVGKRFCIKSIYILGKIWM). The Bipartite nuclear localization signal motif lies at 202–249 (KRFYRLNHHVTYNHQEAGKYENHTENALLLYMACTHASNPVYATLKIR).

It belongs to the geminiviridae capsid protein family. As to quaternary structure, homomultimer. Binds to single-stranded and double-stranded viral DNA. Interacts (via nuclear localization signals) with host importin alpha-1a.

The protein localises to the virion. Its subcellular location is the host nucleus. Its function is as follows. Encapsidates the viral DNA into characteristic twinned ('geminate') particles. Binds the genomic viral ssDNA and shuttles it into and out of the cell nucleus. The CP of bipartite geminiviruses is not required for cell-to-cell or systemic movement. The sequence is that of Capsid protein from Hewittia sublobata (Coralbush).